Consider the following 91-residue polypeptide: uncharacterized protein (91 aa).

This is an uncharacterized protein from Homo sapiens (Human).